The primary structure comprises 229 residues: MSETGSIADGYAAADIRAAEAPLLAAGAQLMRVAAAGLARVCRAEAPSGPVLVLVGAGNNGGDALLAAADLARDGRDVRVIRTASRIHGAAARAAEAGVPITPAEELDDAEVAALARASALVVDGILGIGTTASPALRGEARRVVAALLPVILGAGGPVVVACDIPSGVGCDDGQVPDPTVLSADVTVTFGAGKPGLMRGPGRALAGRVELVDVGLDLSGATPVARAAR.

The 212-residue stretch at 11 to 222 (YAAADIRAAE…DVGLDLSGAT (212 aa)) folds into the YjeF N-terminal domain. A (6S)-NADPHX-binding site is contributed by 59–63 (NNGGD). Positions 60 and 124 each coordinate K(+). (6S)-NADPHX contacts are provided by residues 128-136 (GIGTTASPA) and Asp-164. Ser-167 lines the K(+) pocket.

The protein belongs to the NnrE/AIBP family. It depends on K(+) as a cofactor.

The catalysed reaction is (6R)-NADHX = (6S)-NADHX. It carries out the reaction (6R)-NADPHX = (6S)-NADPHX. In terms of biological role, catalyzes the epimerization of the S- and R-forms of NAD(P)HX, a damaged form of NAD(P)H that is a result of enzymatic or heat-dependent hydration. This is a prerequisite for the S-specific NAD(P)H-hydrate dehydratase to allow the repair of both epimers of NAD(P)HX. This chain is NAD(P)H-hydrate epimerase, found in Clavibacter sepedonicus (Clavibacter michiganensis subsp. sepedonicus).